Consider the following 419-residue polypeptide: tRNA modification GTPase MnmE (419 aa).

Arg2, Glu59, and Arg99 together coordinate (6S)-5-formyl-5,6,7,8-tetrahydrofolate. The TrmE-type G domain maps to 197-343; that stretch reads GLSVVIAGPP…LHTMIVEMAR (147 aa). Asn207 contacts K(+). Residues 207–212, 226–232, and 251–254 each bind GTP; these read NAGKST, SPVAGTT, and DTAG. Ser211 serves as a coordination point for Mg(2+). Ser226, Val228, and Thr231 together coordinate K(+). Thr232 provides a ligand contact to Mg(2+). Lys419 lines the (6S)-5-formyl-5,6,7,8-tetrahydrofolate pocket.

Belongs to the TRAFAC class TrmE-Era-EngA-EngB-Septin-like GTPase superfamily. TrmE GTPase family. Homodimer. Heterotetramer of two MnmE and two MnmG subunits. K(+) is required as a cofactor.

It localises to the cytoplasm. Exhibits a very high intrinsic GTPase hydrolysis rate. Involved in the addition of a carboxymethylaminomethyl (cmnm) group at the wobble position (U34) of certain tRNAs, forming tRNA-cmnm(5)s(2)U34. The protein is tRNA modification GTPase MnmE of Sphingopyxis alaskensis (strain DSM 13593 / LMG 18877 / RB2256) (Sphingomonas alaskensis).